Reading from the N-terminus, the 626-residue chain is Ankyrin repeat domain-containing protein 13B (626 aa).

Met1 is modified (N-acetylmethionine). ANK repeat units follow at residues 47–76 (RGRT…DVGR) and 80–109 (SGWT…YQRV). The segment at 442 to 474 (PVPSVRGSPSSETPSPGSDSSSVSSSSSTTSCR) is disordered. A compositionally biased stretch (low complexity) spans 449-472 (SPSSETPSPGSDSSSVSSSSSTTS). Residues 503 to 522 (DDDDLLQFAIQQSLLEAGSE) form the UIM 1 domain. Disordered stretches follow at residues 534-590 (NSKP…DEQL) and 595-614 (ELSA…EEEE). Pro residues predominate over residues 554 to 573 (PPTPQRQPAPPASVPSPRPS). UIM domains lie at 585 to 604 (SYDE…QEER) and 610 to 626 (QEEE…LTEQ).

Interacts with EGFR (ubiquitinated); the interaction is direct and may regulate EGFR internalization.

The protein resides in the cell membrane. Its subcellular location is the late endosome. The protein localises to the early endosome. Functionally, ubiquitin-binding protein that specifically recognizes and binds 'Lys-63'-linked ubiquitin. Does not bind 'Lys-48'-linked ubiquitin. Positively regulates the internalization of ligand-activated EGFR by binding to the Ub moiety of ubiquitinated EGFR at the cell membrane. This is Ankyrin repeat domain-containing protein 13B (ANKRD13B) from Homo sapiens (Human).